A 298-amino-acid polypeptide reads, in one-letter code: ATP synthase F(1) complex subunit gamma, mitochondrial (298 aa).

The N-terminal 25 residues, 1-25 (MFSRAGVAGLSAWTVQPQWIQVRNM), are a transit peptide targeting the mitochondrion. Lys-39 carries the post-translational modification N6-acetyllysine. Residue Lys-49 is modified to N6-succinyllysine. An N6-acetyllysine modification is found at Lys-55. Residue Lys-115 is modified to N6-acetyllysine; alternate. N6-succinyllysine; alternate is present on Lys-115. The residue at position 146 (Ser-146) is a Phosphoserine. Residue Lys-154 is modified to N6-acetyllysine; alternate. An N6-succinyllysine; alternate modification is found at Lys-154. An N6-acetyllysine modification is found at Lys-197. N6-succinyllysine is present on Lys-270.

The protein belongs to the ATPase gamma chain family. In terms of assembly, component of the ATP synthase complex composed at least of ATP5F1A/subunit alpha, ATP5F1B/subunit beta, ATP5MC1/subunit c (homooctomer), MT-ATP6/subunit a, MT-ATP8/subunit 8, ATP5ME/subunit e, ATP5MF/subunit f, ATP5MG/subunit g, ATP5MK/subunit k, ATP5MJ/subunit j, ATP5F1C/subunit gamma, ATP5F1D/subunit delta, ATP5F1E/subunit epsilon, ATP5PF/subunit F6, ATP5PB/subunit b, ATP5PD/subunit d, ATP5PO/subunit OSCP. ATP synthase complex consists of a soluble F(1) head domain (subunits alpha(3) and beta(3)) - the catalytic core - and a membrane F(0) domain - the membrane proton channel (subunits c, a, 8, e, f, g, k and j). These two domains are linked by a central stalk (subunits gamma, delta, and epsilon) rotating inside the F1 region and a stationary peripheral stalk (subunits F6, b, d, and OSCP). Interacts with FLVCR2; this interaction occurs in the absence of heme and is disrupted upon heme binding.

The protein localises to the mitochondrion inner membrane. In terms of biological role, subunit gamma, of the mitochondrial membrane ATP synthase complex (F(1)F(0) ATP synthase or Complex V) that produces ATP from ADP in the presence of a proton gradient across the membrane which is generated by electron transport complexes of the respiratory chain. ATP synthase complex consist of a soluble F(1) head domain - the catalytic core - and a membrane F(1) domain - the membrane proton channel. These two domains are linked by a central stalk rotating inside the F(1) region and a stationary peripheral stalk. During catalysis, ATP synthesis in the catalytic domain of F(1) is coupled via a rotary mechanism of the central stalk subunits to proton translocation. In vivo, can only synthesize ATP although its ATP hydrolase activity can be activated artificially in vitro. With the central stalk subunit delta, is essential for the biogenesis of F(1) catalytic part of the ATP synthase complex namely in the formation of F1 assembly intermediate. The protein is ATP synthase F(1) complex subunit gamma, mitochondrial of Bos taurus (Bovine).